The primary structure comprises 116 residues: NADH-ubiquinone oxidoreductase chain 3 (116 aa).

3 helical membrane-spanning segments follow: residues 4-24, 56-76, and 87-107; these read FMVM…LAFW, FFLV…LLPS, and FTLL…IYEW.

Belongs to the complex I subunit 3 family.

Its subcellular location is the mitochondrion membrane. The catalysed reaction is a ubiquinone + NADH + 5 H(+)(in) = a ubiquinol + NAD(+) + 4 H(+)(out). Its function is as follows. Core subunit of the mitochondrial membrane respiratory chain NADH dehydrogenase (Complex I) that is believed to belong to the minimal assembly required for catalysis. Complex I functions in the transfer of electrons from NADH to the respiratory chain. The immediate electron acceptor for the enzyme is believed to be ubiquinone. This Petromyzon marinus (Sea lamprey) protein is NADH-ubiquinone oxidoreductase chain 3 (MT-ND3).